A 680-amino-acid chain; its full sequence is Translation factor GUF1 homolog, chloroplastic (680 aa).

Residues 1–51 constitute a chloroplast transit peptide; that stretch reads MAAKINSLAALVSLQASHHHHXSTPFYFSPFSPHLSTTLTSRRRSLRSAVV. Residues 83–264 form the tr-type G domain; the sequence is SNIRNFCIIA…AIVKRIPPPC (182 aa). Residues 92–99, 157–161, and 211–214 contribute to the GTP site; these read AHIDHGKS, DTPGH, and NKID.

This sequence belongs to the TRAFAC class translation factor GTPase superfamily. Classic translation factor GTPase family. LepA subfamily.

The protein resides in the plastid. It is found in the chloroplast. It carries out the reaction GTP + H2O = GDP + phosphate + H(+). In terms of biological role, promotes chloroplast protein synthesis. May act as a fidelity factor of the translation reaction, by catalyzing a one-codon backward translocation of tRNAs on improperly translocated ribosomes. The sequence is that of Translation factor GUF1 homolog, chloroplastic from Vitis vinifera (Grape).